Here is a 91-residue protein sequence, read N- to C-terminus: UPF0298 protein spyM18_0447 (91 aa).

It belongs to the UPF0298 family.

It localises to the cytoplasm. This Streptococcus pyogenes serotype M18 (strain MGAS8232) protein is UPF0298 protein spyM18_0447.